The primary structure comprises 291 residues: MAENRYELNKNLAQMLKGGVIMDVQNPEQARIAEAAGAAAVMALERIPADIRAVGGVSRMSDPKMIKEIQGAVSIPVMAKVRIGHFVEAQILEAIEIDYIDESEVLSPADNRFHVDKKEFQVPFVCGAKDLGEALRRIAEGASMIRTKGEPGTGDIVQAVRHMRMMSQEIRRIQNLREDELYVAAKDLQVPVELVQYVHKNGKLPVVNFAAGGIATPADAALMMQLGAEGVFVGSGIFKSGDPIKRASAIVKAVTNYQNPQILAKISEDLGEAMVGINENEIQILMAERGK.

D23 is a D-ribose 5-phosphate binding site. Catalysis depends on K80, which acts as the Schiff-base intermediate with D-ribose 5-phosphate. G152 lines the D-ribose 5-phosphate pocket. R164 serves as a coordination point for D-glyceraldehyde 3-phosphate. D-ribose 5-phosphate is bound by residues G213 and 234–235 (GS).

This sequence belongs to the PdxS/SNZ family. In the presence of PdxT, forms a dodecamer of heterodimers.

It carries out the reaction aldehydo-D-ribose 5-phosphate + D-glyceraldehyde 3-phosphate + L-glutamine = pyridoxal 5'-phosphate + L-glutamate + phosphate + 3 H2O + H(+). It functions in the pathway cofactor biosynthesis; pyridoxal 5'-phosphate biosynthesis. Catalyzes the formation of pyridoxal 5'-phosphate from ribose 5-phosphate (RBP), glyceraldehyde 3-phosphate (G3P) and ammonia. The ammonia is provided by the PdxT subunit. Can also use ribulose 5-phosphate and dihydroxyacetone phosphate as substrates, resulting from enzyme-catalyzed isomerization of RBP and G3P, respectively. The sequence is that of Pyridoxal 5'-phosphate synthase subunit PdxS from Haemophilus influenzae (strain PittGG).